Here is a 367-residue protein sequence, read N- to C-terminus: DNA replication and repair protein RecF (367 aa).

30–37 (GANGSGKT) provides a ligand contact to ATP.

This sequence belongs to the RecF family.

It is found in the cytoplasm. The RecF protein is involved in DNA metabolism; it is required for DNA replication and normal SOS inducibility. RecF binds preferentially to single-stranded, linear DNA. It also seems to bind ATP. This chain is DNA replication and repair protein RecF, found in Pseudomonas syringae pv. tomato (strain ATCC BAA-871 / DC3000).